Consider the following 1257-residue polypeptide: Phosphatidylinositol 3,4,5-trisphosphate 5-phosphatase 2 (1257 aa).

Positions 21–117 (WYHRDLSRAA…GLVCALLLPV (97 aa)) constitute an SH2 domain. The segment covering 119 to 132 (GEREPDPPDDRDAS) has biased composition (basic and acidic residues). The segment at 119–181 (GEREPDPPDD…ESTPNGLSTV (63 aa)) is disordered. Residue Ser-132 is modified to Phosphoserine. Residues 156-166 (PSSPLPTPETP) show a composition bias toward pro residues. A Phosphothreonine modification is found at Thr-165. Residues Ser-241 and Ser-353 each carry the phosphoserine modification. Tyr-887 bears the Phosphotyrosine mark. Ser-891 carries the phosphoserine modification. Residues 897–986 (TGAKSKVPSV…PPKNSFNNPA (90 aa)) are disordered. Residues 939–951 (PPPTGRPPAPPRA) show a composition bias toward pro residues. The SH3-binding signature appears at 945 to 950 (PPAPPR). The span at 952–966 (VPREEPLNPRLKSEG) shows a compositional bias: basic and acidic residues. Positions 984 to 987 (NPAY) match the NPXY motif motif. Tyr-987 is subject to Phosphotyrosine. Residues 999–1008 (PLEPPSLARA) are compositionally biased toward low complexity. Residues 999-1119 (PLEPPSLARA…FLGEVASGDD (121 aa)) form a disordered region. 2 stretches are compositionally biased toward pro residues: residues 1049 to 1060 (LPPPDFPPPPLP) and 1088 to 1104 (GPPPPKAHPRPPLPPGT). Ser-1132 is subject to Phosphoserine. The segment at 1134–1196 (VDYAPGPGRS…PQGGRASGLG (63 aa)) is disordered. Phosphotyrosine occurs at positions 1136 and 1161. Residues 1195-1257 (LGEAGMGAWL…LLLDTLQLSK (63 aa)) form the SAM domain. Ser-1256 is subject to Phosphoserine.

It belongs to the inositol 1,4,5-trisphosphate 5-phosphatase family. Interacts with tyrosine phosphorylated form of SHC1. Interacts with EGFR. Upon stimulation by the EGF signaling pathway, it forms a complex with SHC1 and EGFR. Interacts with cytoskeletal protein SORBS3/vinexin, promoting its localization to the periphery of cells. Forms a complex with filamin (FLNA or FLNB), actin, GPIb (GP1BA or GP1BB) that regulates cortical and submembraneous actin. Interacts with c-Met/MET, when c-Met/MET is phosphorylated on 'Tyr-1356'. Interacts with p130Cas/BCAR1. Interacts with CENTD3/ARAP3 via its SAM domain. Interacts with c-Cbl/CBL and CAP/SORBS1. Interacts with activated EPHA2 receptor. Interacts with receptors FCGR2A. Interacts with FCGR2B. Interacts with tyrosine kinase ABL1. Interacts with tyrosine kinase TEC. Interacts with CSF1R. Interacts (via N-terminus) with SH3YL1 (via SH3 domain). Interacts (via SH2 domain) with tyrosine phosphorylated KLRC1 (via ITIM). Interacts with NEDD9/HEF1. Tyrosine phosphorylated by the members of the SRC family after exposure to a diverse array of extracellular stimuli such as insulin, growth factors such as EGF or PDGF, chemokines, integrin ligands and hypertonic and oxidative stress. May be phosphorylated upon IgG receptor FCGR2B-binding. Phosphorylated at Tyr-987 following cell attachment and spreading. Phosphorylated at Tyr-1161 following EGF signaling pathway stimulation. Widely expressed.

The protein localises to the cytoplasm. It is found in the cytosol. Its subcellular location is the cytoskeleton. The protein resides in the membrane. It localises to the cell projection. The protein localises to the filopodium. It is found in the lamellipodium. Its subcellular location is the basal cell membrane. The protein resides in the nucleus. It localises to the nucleus speckle. The protein localises to the spindle pole. It carries out the reaction a 1,2-diacyl-sn-glycero-3-phospho-(1D-myo-inositol-3,4,5-trisphosphate) + H2O = a 1,2-diacyl-sn-glycero-3-phospho-(1D-myo-inositol-3,4-bisphosphate) + phosphate. It catalyses the reaction 1,2-dioctanoyl-sn-glycero-3-phospho-(1D-myo-inositol-3,4,5-trisphosphate) + H2O = 1,2-dioctanoyl-sn-glycero-3-phospho-(1D-myo-inositol-3,4-bisphosphate) + phosphate. The enzyme catalyses 1,2-dihexadecanoyl-sn-glycero-3-phospho-(1D-myo-inositol-3,4,5-trisphosphate) + H2O = 1,2-dihexadecanoyl-sn-glycero-3-phospho-(1D-myo-inositol-3,4-bisphosphate) + phosphate. Its activity is regulated as follows. Activated upon translocation to the sites of synthesis of PtdIns(3,4,5)P3 in the membrane. Enzymatic activity is enhanced in the presence of phosphatidylserine. In terms of biological role, phosphatidylinositol (PtdIns) phosphatase that specifically hydrolyzes the 5-phosphate of phosphatidylinositol-3,4,5-trisphosphate (PtdIns(3,4,5)P3) to produce PtdIns(3,4)P2, thereby negatively regulating the PI3K (phosphoinositide 3-kinase) pathways. Required for correct mitotic spindle orientation and therefore progression of mitosis. Plays a central role in regulation of PI3K-dependent insulin signaling, although the precise molecular mechanisms and signaling pathways remain unclear. While overexpression reduces both insulin-stimulated MAP kinase and Akt activation, its absence does not affect insulin signaling or GLUT4 trafficking. Confers resistance to dietary obesity. May act by regulating AKT2, but not AKT1, phosphorylation at the plasma membrane. Part of a signaling pathway that regulates actin cytoskeleton remodeling. Required for the maintenance and dynamic remodeling of actin structures as well as in endocytosis, having a major impact on ligand-induced EGFR internalization and degradation. Participates in regulation of cortical and submembraneous actin by hydrolyzing PtdIns(3,4,5)P3 thereby regulating membrane ruffling. Regulates cell adhesion and cell spreading. Required for HGF-mediated lamellipodium formation, cell scattering and spreading. Acts as a negative regulator of EPHA2 receptor endocytosis by inhibiting via PI3K-dependent Rac1 activation. Acts as a regulator of neuritogenesis by regulating PtdIns(3,4,5)P3 level and is required to form an initial protrusive pattern, and later, maintain proper neurite outgrowth. Acts as a negative regulator of the FC-gamma-RIIA receptor (FCGR2A). Mediates signaling from the FC-gamma-RIIB receptor (FCGR2B), playing a central role in terminating signal transduction from activating immune/hematopoietic cell receptor systems. Upon stimulation by EGF, it is recruited by EGFR and dephosphorylates PtdIns(3,4,5)P3. Plays a negative role in regulating the PI3K-PKB pathway, possibly by inhibiting PKB activity. Down-regulates Fc-gamma-R-mediated phagocytosis in macrophages independently of INPP5D/SHIP1. In macrophages, down-regulates NF-kappa-B-dependent gene transcription by regulating macrophage colony-stimulating factor (M-CSF)-induced signaling. Plays a role in the localization of AURKA and NEDD9/HEF1 to the basolateral membrane at interphase in polarized cysts, thereby mediates cell cycle homeostasis, cell polarization and cilia assembly. Additionally promotion of cilia growth is also facilitated by hydrolysis of (PtdIns(3,4,5)P3) to PtdIns(3,4)P2. Promotes formation of apical membrane-initiation sites during the initial stages of lumen formation via Rho family-induced actin filament organization and CTNNB1 localization to cell-cell contacts. May also hydrolyze PtdIns(1,3,4,5)P4, and could thus affect the levels of the higher inositol polyphosphates like InsP6. Involved in endochondral ossification. This is Phosphatidylinositol 3,4,5-trisphosphate 5-phosphatase 2 from Mus musculus (Mouse).